The sequence spans 521 residues: Phospholipase C B (521 aa).

Positions 1–39 (MGSEHPVDGMTRRQFFAKAAAATTAGAFMSLAGPIIEKA) form a signal peptide, tat-type signal. The tract at residues 501-521 (FPQSMPTQETAPTRGIPSGLC) is disordered.

The protein belongs to the bacterial phospholipase C family. Predicted to be exported by the Tat system. The position of the signal peptide cleavage has not been experimentally proven.

It is found in the secreted. The protein resides in the cell wall. It carries out the reaction a 1,2-diacyl-sn-glycero-3-phosphocholine + H2O = phosphocholine + a 1,2-diacyl-sn-glycerol + H(+). Its function is as follows. Involved in virulence. Induces cytotoxic effects on mouse macrophage cell lines, via direct or indirect enzymatic hydrolysis of cell membrane phospholipids. Hydrolyzes phosphatidylcholine. This is Phospholipase C B from Mycobacterium tuberculosis (strain CDC 1551 / Oshkosh).